A 201-amino-acid chain; its full sequence is Transcription factor MYB82 (201 aa).

HTH myb-type domains lie at 9-61 (KSYV…KNYL) and 62-116 (RPNI…NKKP). 2 DNA-binding regions (H-T-H motif) span residues 37 to 61 (WADISRRSGLKRGGKSCRLRWKNYL) and 89 to 112 (WSLIAGRLPGRTDNEVKNYWNTHL). The interval 112–133 (LNKKPNSRRQNAPESIVGATPF) is disordered.

Homodimer and heterodimer with GL1. Part of the WD40-bHLH-MYB complex. Interacts with BHLH012/MYC1 and BHLH042/TT8. Interacts (via N-terminus) with GL1 and GL3. As to expression, mainly expressed in the trichomes of new leaves.

The protein localises to the nucleus. In terms of biological role, transcription activation factor positively regulating trichomes development. Has a function nearly equivalent to that of GL1 and can complement gl1 mutants. This Arabidopsis thaliana (Mouse-ear cress) protein is Transcription factor MYB82 (MYB82).